A 203-amino-acid polypeptide reads, in one-letter code: MLEALDLAGVRGERRLFDHLTFRIVPGECLSVHGENGSGKTTLLRTLAGFATPAAGRVLWKGKPLRNQWSEYQRELVYNGHGIGLKEDLNALDNLLAAAAIAGEPVTTECVESALDEVGLAEHRHLPFRMLSQGQKRRASLARLLLYRRKLWILDEPSTALDQFGARWLGELIHRHQSRGGMVVLTSHQELALKTSQTVRMGA.

An ABC transporter domain is found at 2-203; the sequence is LEALDLAGVR…KTSQTVRMGA (202 aa). Residue 34-41 coordinates ATP; the sequence is GENGSGKT.

Belongs to the ABC transporter superfamily. CcmA exporter (TC 3.A.1.107) family. As to quaternary structure, the complex is composed of two ATP-binding proteins (CcmA) and two transmembrane proteins (CcmB).

The protein resides in the cell inner membrane. The catalysed reaction is heme b(in) + ATP + H2O = heme b(out) + ADP + phosphate + H(+). Its function is as follows. Part of the ABC transporter complex CcmAB involved in the biogenesis of c-type cytochromes; once thought to export heme, this seems not to be the case, but its exact role is uncertain. Responsible for energy coupling to the transport system. The protein is Cytochrome c biogenesis ATP-binding export protein CcmA of Pseudomonas aeruginosa.